A 144-amino-acid polypeptide reads, in one-letter code: D-aminoacyl-tRNA deacylase (144 aa).

The short motif at 136–137 (GP) is the Gly-cisPro motif, important for rejection of L-amino acids element.

This sequence belongs to the DTD family. Homodimer.

Its subcellular location is the cytoplasm. The catalysed reaction is glycyl-tRNA(Ala) + H2O = tRNA(Ala) + glycine + H(+). The enzyme catalyses a D-aminoacyl-tRNA + H2O = a tRNA + a D-alpha-amino acid + H(+). Functionally, an aminoacyl-tRNA editing enzyme that deacylates mischarged D-aminoacyl-tRNAs. Also deacylates mischarged glycyl-tRNA(Ala), protecting cells against glycine mischarging by AlaRS. Acts via tRNA-based rather than protein-based catalysis; rejects L-amino acids rather than detecting D-amino acids in the active site. By recycling D-aminoacyl-tRNA to D-amino acids and free tRNA molecules, this enzyme counteracts the toxicity associated with the formation of D-aminoacyl-tRNA entities in vivo and helps enforce protein L-homochirality. The chain is D-aminoacyl-tRNA deacylase from Glaesserella parasuis serovar 5 (strain SH0165) (Haemophilus parasuis).